The primary structure comprises 545 residues: MALPSPASEEAEGPCQEANQEYQEPVCSPVPEPEPEPEPEPEPDPEPVPVPPPEPQPEPEPQPLPDPAPLPELGFEAEPVQEPEPTPTVETRGTARGFQPPEGGFGWIVVFAATWCNGSIFGIHNSVGILYSMLLEEEKEKNRQVEFQAAWVGALAMGMIFFCSPIVSIFTDRLGCRITATTGAAVAFIGLHTSSFTSSLSLRYFTYGILFGCGCSFAFQPSLVILGHYFQRRLGLANGVVSAGSSIFSMSFPFLIKMLGDKIKLAQTFQVLSTFMFVLTLLSLTYRPLLPSSQDTPSKRGAHTLRQRFLVQFRKYFNMRVFRQRTYRIWAFGIAAAALGYFVPYVHLMKYVEDKFKEIKETWVLLVCIGATSGLGRLVSGHISDSIPGLKKIYLQVLSFLLLGLMSMMIPLCRDFGGLIVVCLFLGLCDGFFITIMAPIAFELVGPMQASQAIGYLLGMMALPMIAGPPIAGLLRNCFGDYHVAFYFAGVPPIIGAVILFFVPLMHQRMFKKEQRDSSKDKMLSHDPDPNGELLPGSPTPEEPI.

The tract at residues 1–98 (MALPSPASEE…VETRGTARGF (98 aa)) is disordered. Alanine 2 carries the N-acetylalanine modification. Residues 2 to 102 (ALPSPASEEA…GTARGFQPPE (101 aa)) lie on the Cytoplasmic side of the membrane. 2 repeat units span residues 29–50 (PVPEPEPEPEPEPEPDPEPVPV) and 51–72 (PPPEPQPEPEPQPLPDPAPLPE). The segment at 29–72 (PVPEPEPEPEPEPEPDPEPVPVPPPEPQPEPEPQPLPDPAPLPE) is 2 X 22 AA approximate tandem repeats. Residues 33–45 (PEPEPEPEPEPDP) are compositionally biased toward acidic residues. Residues 46-70 (EPVPVPPPEPQPEPEPQPLPDPAPL) show a composition bias toward pro residues. The helical transmembrane segment at 103 to 123 (GGFGWIVVFAATWCNGSIFGI) threads the bilayer. Over 124–149 (HNSVGILYSMLLEEEKEKNRQVEFQA) the chain is Extracellular. The helical transmembrane segment at 150 to 170 (AWVGALAMGMIFFCSPIVSIF) threads the bilayer. Topologically, residues 171-177 (TDRLGCR) are cytoplasmic. A helical membrane pass occupies residues 178–198 (ITATTGAAVAFIGLHTSSFTS). The Extracellular segment spans residues 199-206 (SLSLRYFT). A helical transmembrane segment spans residues 207-227 (YGILFGCGCSFAFQPSLVILG). The Cytoplasmic segment spans residues 228–235 (HYFQRRLG). Residues 236-256 (LANGVVSAGSSIFSMSFPFLI) traverse the membrane as a helical segment. The Extracellular portion of the chain corresponds to 257–264 (KMLGDKIK). Residues 265–285 (LAQTFQVLSTFMFVLTLLSLT) form a helical membrane-spanning segment. The Cytoplasmic segment spans residues 286 to 328 (YRPLLPSSQDTPSKRGAHTLRQRFLVQFRKYFNMRVFRQRTYR). A helical transmembrane segment spans residues 329-349 (IWAFGIAAAALGYFVPYVHLM). Residues 350–362 (KYVEDKFKEIKET) are Extracellular-facing. The chain crosses the membrane as a helical span at residues 363–383 (WVLLVCIGATSGLGRLVSGHI). Residues 384–392 (SDSIPGLKK) are Cytoplasmic-facing. The helical transmembrane segment at 393–413 (IYLQVLSFLLLGLMSMMIPLC) threads the bilayer. The Extracellular segment spans residues 414–415 (RD). Residues 416-436 (FGGLIVVCLFLGLCDGFFITI) form a helical membrane-spanning segment. Topologically, residues 437 to 453 (MAPIAFELVGPMQASQA) are cytoplasmic. Residues 454 to 474 (IGYLLGMMALPMIAGPPIAGL) form a helical membrane-spanning segment. The Extracellular segment spans residues 475–483 (LRNCFGDYH). A helical transmembrane segment spans residues 484-504 (VAFYFAGVPPIIGAVILFFVP). At 505 to 545 (LMHQRMFKKEQRDSSKDKMLSHDPDPNGELLPGSPTPEEPI) the chain is on the cytoplasmic side. Basic and acidic residues predominate over residues 514–529 (EQRDSSKDKMLSHDPD). The interval 514-545 (EQRDSSKDKMLSHDPDPNGELLPGSPTPEEPI) is disordered. Threonine 540 is modified (phosphothreonine).

It belongs to the major facilitator superfamily. Monocarboxylate porter (TC 2.A.1.13) family. Monomer. Homodimer. Homooligomer. As to expression, expressed in cerebral microvessels.

The protein localises to the cell membrane. It is found in the apical cell membrane. The catalysed reaction is 3,3',5-triiodo-L-thyronine(out) = 3,3',5-triiodo-L-thyronine(in). It carries out the reaction 3,3',5'-triiodo-L-thyronine(out) = 3,3',5'-triiodo-L-thyronine(in). It catalyses the reaction L-thyroxine(out) = L-thyroxine(in). The enzyme catalyses 3,3'-diiodo-L-thyronine(out) = 3,3'-diiodo-L-thyronine(in). Its function is as follows. Specific thyroid hormone transmembrane transporter, that mediates both uptake and efflux of thyroid hormones across the cell membrane independently of pH or a Na(+) gradient. Major substrates are the iodothyronines T3 and T4 and to a lesser extent rT3 and 3,3-diiodothyronine (3,3'-T2). Acts as an important mediator of thyroid hormone transport, especially T3, through the blood-brain barrier. This is Monocarboxylate transporter 8 (Slc16a2) from Mus musculus (Mouse).